A 77-amino-acid chain; its full sequence is Translational regulator CsrA (77 aa).

Belongs to the CsrA/RsmA family. As to quaternary structure, homodimer; the beta-strands of each monomer intercalate to form a hydrophobic core, while the alpha-helices form wings that extend away from the core.

Its subcellular location is the cytoplasm. In terms of biological role, a translational regulator that binds mRNA to regulate translation initiation and/or mRNA stability. Usually binds in the 5'-UTR at or near the Shine-Dalgarno sequence preventing ribosome-binding, thus repressing translation. Its main target seems to be the major flagellin gene, while its function is anatagonized by FliW. This Desulfitobacterium hafniense (strain DSM 10664 / DCB-2) protein is Translational regulator CsrA.